Consider the following 427-residue polypeptide: 3-phosphoshikimate 1-carboxyvinyltransferase (427 aa).

Positions 22, 23, and 27 each coordinate 3-phosphoshikimate. Lys-22 is a phosphoenolpyruvate binding site. Phosphoenolpyruvate contacts are provided by Gly-96 and Arg-124. Residues Ser-169, Ser-170, Gln-171, Ser-197, Asp-313, Asn-336, and Lys-340 each contribute to the 3-phosphoshikimate site. Gln-171 provides a ligand contact to phosphoenolpyruvate. Catalysis depends on Asp-313, which acts as the Proton acceptor. Phosphoenolpyruvate contacts are provided by Arg-344, Arg-386, and Lys-411.

It belongs to the EPSP synthase family. As to quaternary structure, monomer.

The protein resides in the cytoplasm. The enzyme catalyses 3-phosphoshikimate + phosphoenolpyruvate = 5-O-(1-carboxyvinyl)-3-phosphoshikimate + phosphate. It participates in metabolic intermediate biosynthesis; chorismate biosynthesis; chorismate from D-erythrose 4-phosphate and phosphoenolpyruvate: step 6/7. Catalyzes the transfer of the enolpyruvyl moiety of phosphoenolpyruvate (PEP) to the 5-hydroxyl of shikimate-3-phosphate (S3P) to produce enolpyruvyl shikimate-3-phosphate and inorganic phosphate. The protein is 3-phosphoshikimate 1-carboxyvinyltransferase of Escherichia coli O8 (strain IAI1).